Here is a 434-residue protein sequence, read N- to C-terminus: Alpha-enolase (434 aa).

Ser2 carries the post-translational modification N-acetylserine. Position 5 is an N6-acetyllysine (Lys5). Residue Ser27 is modified to Phosphoserine. Ser40 provides a ligand contact to Mg(2+). Tyr44 carries the phosphotyrosine modification. An N6-acetyllysine; alternate modification is found at Lys60. Position 60 is an N6-succinyllysine; alternate (Lys60). N6-acetyllysine is present on residues Lys64 and Lys71. The residue at position 89 (Lys89) is an N6-acetyllysine; alternate. Position 89 is an N6-succinyllysine; alternate (Lys89). An N6-acetyllysine mark is found at Lys92 and Lys126. Residues His158 and Glu167 each coordinate substrate. An N6-acetyllysine mark is found at Lys193 and Lys199. Lys202 is modified (N6-acetyllysine; alternate). A Glycyl lysine isopeptide (Lys-Gly) (interchain with G-Cter in SUMO2); alternate cross-link involves residue Lys202. Glu210 functions as the Proton donor in the catalytic mechanism. Lys228 and Lys233 each carry N6-acetyllysine; alternate. N6-succinyllysine; alternate is present on Lys228. The residue at position 228 (Lys228) is an N6-(2-hydroxyisobutyryl)lysine; alternate. Lys233 bears the N6-malonyllysine; alternate mark. Residue Asp245 participates in Mg(2+) binding. At Ser254 the chain carries Phosphoserine. Lys256 is subject to N6-acetyllysine. Residues Ser263 and Ser272 each carry the phosphoserine modification. At Lys281 the chain carries N6-acetyllysine; alternate. Lys281 bears the N6-(2-hydroxyisobutyryl)lysine; alternate mark. An N6-acetyllysine modification is found at Lys285. Tyr287 carries the post-translational modification Phosphotyrosine. Ser291 is subject to Phosphoserine. Mg(2+)-binding residues include Glu293 and Asp318. The substrate site is built by Glu293 and Asp318. N6-acetyllysine occurs at positions 335 and 343. The active-site Proton acceptor is Lys343. Residues 370 to 373 (SHRS) and Lys394 each bind substrate. Residues 405–434 (AKYNQLLRIEEELGSKAKFAGRNFRNPLAK) are required for interaction with PLG. Lys406 carries the post-translational modification N6-acetyllysine. Lys420 carries the post-translational modification N6-acetyllysine; alternate. N6-succinyllysine; alternate is present on Lys420. Lys420 bears the N6-malonyllysine; alternate mark.

The protein belongs to the enolase family. As to quaternary structure, mammalian enolase is composed of 3 isozyme subunits, alpha, beta and gamma, which can form homodimers or heterodimers which are cell-type and development-specific. ENO1 interacts with PLG in the neuronal plasma membrane and promotes its activation. The C-terminal lysine is required for this binding. Interacts with ENO4 and PGAM2. Interacts with CMTM6. It depends on Mg(2+) as a cofactor. Post-translationally, ISGylated. Lysine 2-hydroxyisobutyrylation (Khib) by p300/EP300 activates the phosphopyruvate hydratase activity.

Its subcellular location is the cytoplasm. The protein resides in the cell membrane. It carries out the reaction (2R)-2-phosphoglycerate = phosphoenolpyruvate + H2O. Its pathway is carbohydrate degradation; glycolysis; pyruvate from D-glyceraldehyde 3-phosphate: step 4/5. Functionally, glycolytic enzyme the catalyzes the conversion of 2-phosphoglycerate to phosphoenolpyruvate. In addition to glycolysis, involved in various processes such as growth control, hypoxia tolerance and allergic responses. May also function in the intravascular and pericellular fibrinolytic system due to its ability to serve as a receptor and activator of plasminogen on the cell surface of several cell-types such as leukocytes and neurons. Stimulates immunoglobulin production. The sequence is that of Alpha-enolase (ENO1) from Macaca fascicularis (Crab-eating macaque).